A 369-amino-acid chain; its full sequence is Putative 2-aminoethylphosphonate import ATP-binding protein PhnT (369 aa).

One can recognise an ABC transporter domain in the interval 19 to 250 (IVLDSLRVAY…PPNRFAAEFL (232 aa)). Position 51–58 (51–58 (GPSGSGKT)) interacts with ATP.

Belongs to the ABC transporter superfamily. 2-aminoethylphosphonate importer (TC 3.A.1.11.5) family.

It is found in the cell inner membrane. Functionally, probably part of the PhnSTUV complex (TC 3.A.1.11.5) involved in 2-aminoethylphosphonate import. Probably responsible for energy coupling to the transport system. The chain is Putative 2-aminoethylphosphonate import ATP-binding protein PhnT (phnT) from Salmonella typhi.